A 444-amino-acid chain; its full sequence is Aspartate--tRNA(Asp/Asn) ligase (444 aa).

Glutamate 176 lines the L-aspartate pocket. An aspartate region spans residues 198 to 201; sequence QLFK. Residue arginine 220 participates in L-aspartate binding. Residues 220-222, 228-230, and glutamate 367 contribute to the ATP site; these read RAE and RHL. Residues glutamate 367 and serine 370 each contribute to the Mg(2+) site. L-aspartate is bound by residues serine 370 and arginine 374. An ATP-binding site is contributed by 415-418; it reads GCER.

It belongs to the class-II aminoacyl-tRNA synthetase family. Type 2 subfamily. In terms of assembly, homodimer. Mg(2+) is required as a cofactor.

The protein localises to the cytoplasm. It carries out the reaction tRNA(Asx) + L-aspartate + ATP = L-aspartyl-tRNA(Asx) + AMP + diphosphate. In terms of biological role, aspartyl-tRNA synthetase with relaxed tRNA specificity since it is able to aspartylate not only its cognate tRNA(Asp) but also tRNA(Asn). Reaction proceeds in two steps: L-aspartate is first activated by ATP to form Asp-AMP and then transferred to the acceptor end of tRNA(Asp/Asn). The protein is Aspartate--tRNA(Asp/Asn) ligase of Methanosarcina acetivorans (strain ATCC 35395 / DSM 2834 / JCM 12185 / C2A).